A 241-amino-acid polypeptide reads, in one-letter code: Small ribosomal subunit protein uS2 (241 aa).

This sequence belongs to the universal ribosomal protein uS2 family.

The polypeptide is Small ribosomal subunit protein uS2 (Pectobacterium atrosepticum (strain SCRI 1043 / ATCC BAA-672) (Erwinia carotovora subsp. atroseptica)).